A 491-amino-acid polypeptide reads, in one-letter code: UDP-N-acetylmuramate--L-alanine ligase (491 aa).

126-132 (GTHGKTT) contributes to the ATP binding site.

The protein belongs to the MurCDEF family.

It is found in the cytoplasm. The enzyme catalyses UDP-N-acetyl-alpha-D-muramate + L-alanine + ATP = UDP-N-acetyl-alpha-D-muramoyl-L-alanine + ADP + phosphate + H(+). It participates in cell wall biogenesis; peptidoglycan biosynthesis. Functionally, cell wall formation. The polypeptide is UDP-N-acetylmuramate--L-alanine ligase (Shigella flexneri).